The chain runs to 381 residues: GDSL esterase/lipase At3g48460 (381 aa).

Residues 1 to 26 (MSSSISPLLTTAISVAILLFSTISTA) form the signal peptide. Residue Ser45 is the Nucleophile of the active site. Asn112, Asn140, and Asn258 each carry an N-linked (GlcNAc...) asparagine glycan. Catalysis depends on residues Asp344 and His347.

It belongs to the 'GDSL' lipolytic enzyme family.

Its subcellular location is the secreted. This Arabidopsis thaliana (Mouse-ear cress) protein is GDSL esterase/lipase At3g48460.